The primary structure comprises 782 residues: General transcription and DNA repair factor IIH helicase/translocase subunit XPB (782 aa).

Residues 1–11 (MGKRDRVDRDK) are compositionally biased toward basic and acidic residues. The segment at 1 to 52 (MGKRDRVDRDKKKSKKRQYEEEEEDEDDAPGNESQEAVPSAAGKQVDESSTK) is disordered. The Nuclear localization signal motif lies at 6–18 (RVDRDKKKSKKRQ). Acidic residues predominate over residues 20–30 (EEEEEDEDDAP). S34 is subject to Phosphoserine. The Helicase ATP-binding domain occupies 328–489 (FGNGRARSGV…LNFLIGPKLY (162 aa)). Residue 341 to 348 (PCGAGKSL) coordinates ATP. Residues 442–445 (EVHT) carry the DEVH box motif. The Helicase C-terminal domain maps to 543 to 703 (ACQFLIKFHE…AGMEEEELAF (161 aa)). S686 carries the phosphoserine modification. At S751 the chain carries Phosphoserine; by CK2.

The protein belongs to the helicase family. RAD25/XPB subfamily. In terms of assembly, component of the 7-subunit TFIIH core complex composed of XPB/ERCC3, XPD/ERCC2, GTF2H1, GTF2H2, GTF2H3, GTF2H4 and GTF2H5, which is active in NER. The core complex associates with the 3-subunit CDK-activating kinase (CAK) module composed of CCNH/cyclin H, CDK7 and MNAT1 to form the 10-subunit holoenzyme (holo-TFIIH) active in transcription. Interacts with PUF60. Interacts with ATF7IP. Interacts with KAT2A; leading to KAT2A recruitment to promoters and acetylation of histones. Part of TBP-based Pol II pre-initiation complex (PIC), in which Pol II core assembles with general transcription factors and other specific initiation factors including GTF2E1, GTF2E2, GTF2F1, GTF2F2, TCEA1, ERCC2, ERCC3, GTF2H2, GTF2H3, GTF2H4, GTF2H5, GTF2A1, GTF2A2, GTF2B and TBP; this large multi-subunit PIC complex mediates DNA unwinding and targets Pol II core to the transcription start site where the first phosphodiester bond forms. Post-translationally, phosphorylation on Ser-751 by CK2 controls the 5'-excision activity of ERCC1-XPF endonuclease; phosphorylated protein inhibits the excision activity and thus NER. Dephosphorylation reactivates the 5'-excision step. Phosphorylation has no effect on transcription or the 3'-5' helicase activity.

The protein localises to the nucleus. The catalysed reaction is Couples ATP hydrolysis with the unwinding of duplex DNA by translocating in the 3'-5' direction.. The enzyme catalyses ATP + H2O = ADP + phosphate + H(+). With respect to regulation, phosphorylation on Ser-751 by CK2 controls the 5'-excision activity of ERCC1-XPF endonuclease; phosphorylated protein inhibits the excision activity and thus NER. ATPase activity is stimulated by TFIIH subunit p52 (GTF2H4). DNA translocase activity by this subunit in TFIIH is stimulated by XPA, ERCC5/XPG and XFP plus ERCC1. ATP-dependent 3'-5' DNA helicase/translocase; binds dsDNA rather than ssDNA, unzipping it in a translocase rather than classical helicase activity. Component of the general transcription and DNA repair factor IIH (TFIIH) core complex. When complexed to CDK-activating kinase (CAK), involved in RNA transcription by RNA polymerase II. The ATPase activity of XPB/ERCC3, but not its helicase activity, is required for DNA opening; it may wrap around the damaged DNA wedging it open, causing localized melting and twisting that allows XPD/ERCC2 helicase to anchor. The ATP-dependent helicase activity of XPB/ERCC3 may be required for promoter escape. Also involved in transcription-coupled nucleotide excision repair (NER) of damaged DNA. In NER, TFIIH acts by opening DNA around the lesion to allow the excision of the damaged oligonucleotide and its replacement by a new DNA fragment. The structure of the TFIIH transcription complex differs from the NER-TFIIH complex; large movements by XPD/ERCC2 and XPB/ERCC3 are stabilized by XPA. This chain is General transcription and DNA repair factor IIH helicase/translocase subunit XPB (Ercc3), found in Rattus norvegicus (Rat).